The following is a 464-amino-acid chain: Soluble pyridine nucleotide transhydrogenase (464 aa).

35–44 (EASSQVGGSC) contacts FAD.

It belongs to the class-I pyridine nucleotide-disulfide oxidoreductase family. FAD serves as cofactor.

The protein localises to the cytoplasm. The catalysed reaction is NAD(+) + NADPH = NADH + NADP(+). In terms of biological role, conversion of NADPH, generated by peripheral catabolic pathways, to NADH, which can enter the respiratory chain for energy generation. This chain is Soluble pyridine nucleotide transhydrogenase, found in Marinomonas sp. (strain MWYL1).